The chain runs to 89 residues: Defensin-like protein 147 (89 aa).

An N-terminal signal peptide occupies residues 1–24 (MKKIFQLSFTVFIIFISLVLGVVG). Cystine bridges form between Cys-34–Cys-82, Cys-46–Cys-66, Cys-51–Cys-79, and Cys-55–Cys-81.

Belongs to the DEFL family. Expressed in flower buds, but not in stems, roots or rosette leaves.

The protein localises to the secreted. This chain is Defensin-like protein 147 (LCR1), found in Arabidopsis thaliana (Mouse-ear cress).